A 1244-amino-acid chain; its full sequence is DNA polymerase beta (1244 aa).

13 repeat units span residues 1069–1072, 1073–1076, 1077–1080, 1081–1084, 1085–1088, 1089–1092, 1093–1096, 1097–1100, 1101–1104, 1105–1108, 1109–1112, 1113–1116, and 1117–1120. The interval 1069–1118 is disordered; sequence AGNPAGNPAGNPAGNPAGNPAGNPAGNPAGNPAGNPAGNPAGNPAGNPAG. The 13 X 4 AA tandem repeats of A-G-N-P stretch occupies residues 1069–1120; the sequence is AGNPAGNPAGNPAGNPAGNPAGNPAGNPAGNPAGNPAGNPAGNPAGNPAGNP.

The protein belongs to the DNA polymerase type-B family.

It catalyses the reaction DNA(n) + a 2'-deoxyribonucleoside 5'-triphosphate = DNA(n+1) + diphosphate. DNA-directed DNA polymerase involved in viral DNA replication. In African swine fever virus (isolate Pig/Portugal/Lis 60/1960) (ASFV), this protein is DNA polymerase beta (DPOL).